Consider the following 189-residue polypeptide: Elongation factor P (189 aa).

The residue at position 34 (Lys34) is an N6-(3,6-diaminohexanoyl)-5-hydroxylysine.

It belongs to the elongation factor P family. Post-translationally, may be beta-lysylated on the epsilon-amino group of Lys-34 by the combined action of EpmA and EpmB, and then hydroxylated on the C5 position of the same residue by EpmC (if this protein is present). Lysylation is critical for the stimulatory effect of EF-P on peptide-bond formation. The lysylation moiety may extend toward the peptidyltransferase center and stabilize the terminal 3-CCA end of the tRNA. Hydroxylation of the C5 position on Lys-34 may allow additional potential stabilizing hydrogen-bond interactions with the P-tRNA.

It is found in the cytoplasm. The protein operates within protein biosynthesis; polypeptide chain elongation. Its function is as follows. Involved in peptide bond synthesis. Alleviates ribosome stalling that occurs when 3 or more consecutive Pro residues or the sequence PPG is present in a protein, possibly by augmenting the peptidyl transferase activity of the ribosome. Modification of Lys-34 is required for alleviation. In Teredinibacter turnerae (strain ATCC 39867 / T7901), this protein is Elongation factor P.